Here is a 778-residue protein sequence, read N- to C-terminus: LPS-assembly protein LptD (778 aa).

The signal sequence occupies residues 1–23 (MKTRYSVLSVAMTAAFYTQYAQA).

Belongs to the LptD family. In terms of assembly, component of the lipopolysaccharide transport and assembly complex. Interacts with LptE and LptA.

The protein resides in the cell outer membrane. Together with LptE, is involved in the assembly of lipopolysaccharide (LPS) at the surface of the outer membrane. This is LPS-assembly protein LptD from Actinobacillus pleuropneumoniae serotype 5b (strain L20).